The primary structure comprises 169 residues: uncharacterized protein (169 aa).

The region spanning 32-162 (CNFRVVNSFV…EPAKSDLIKL (131 aa)) is the Nudix hydrolase domain. The short motif at 69–91 (GGHVESGETYEDALQRELEEELN) is the Nudix box element. Residues Glu-85 and Glu-89 each coordinate Mg(2+).

It belongs to the Nudix hydrolase family. Mg(2+) is required as a cofactor.

This is an uncharacterized protein from Nostoc sp. (strain PCC 7120 / SAG 25.82 / UTEX 2576).